The sequence spans 102 residues: Large ribosomal subunit protein bL21 (102 aa).

This sequence belongs to the bacterial ribosomal protein bL21 family. In terms of assembly, part of the 50S ribosomal subunit. Contacts protein L20.

Functionally, this protein binds to 23S rRNA in the presence of protein L20. The protein is Large ribosomal subunit protein bL21 of Geobacillus sp. (strain WCH70).